Consider the following 329-residue polypeptide: Glycerol-3-phosphate dehydrogenase [NAD(P)+] (329 aa).

Positions 15, 35, and 107 each coordinate NADPH. Lys107, Gly135, and Ser137 together coordinate sn-glycerol 3-phosphate. Ala139 is an NADPH binding site. Sn-glycerol 3-phosphate-binding residues include Lys190, Asp243, Ser253, Arg254, and Asn255. Lys190 serves as the catalytic Proton acceptor. Position 254 (Arg254) interacts with NADPH. The NADPH site is built by Leu276 and Glu278.

The protein belongs to the NAD-dependent glycerol-3-phosphate dehydrogenase family.

It is found in the cytoplasm. The catalysed reaction is sn-glycerol 3-phosphate + NAD(+) = dihydroxyacetone phosphate + NADH + H(+). It carries out the reaction sn-glycerol 3-phosphate + NADP(+) = dihydroxyacetone phosphate + NADPH + H(+). It functions in the pathway membrane lipid metabolism; glycerophospholipid metabolism. Functionally, catalyzes the reduction of the glycolytic intermediate dihydroxyacetone phosphate (DHAP) to sn-glycerol 3-phosphate (G3P), the key precursor for phospholipid synthesis. The protein is Glycerol-3-phosphate dehydrogenase [NAD(P)+] of Rhodopseudomonas palustris (strain HaA2).